We begin with the raw amino-acid sequence, 177 residues long: B-phycoerythrin beta chain (177 aa).

Phycourobilin contacts are provided by Cys-50 and Cys-61. Asn-72 carries the N4-methylasparagine modification. Residues Cys-82 and Cys-158 each coordinate (2R,3E)-phycoerythrobilin.

Belongs to the phycobiliprotein family. Heteromer of 6 alpha, 6 beta and one gamma chain. Contains two covalently linked phycoerythrobilin chromophores and one covalently linked phycourobilin chromophore.

Its subcellular location is the plastid. The protein localises to the chloroplast thylakoid membrane. Functionally, light-harvesting photosynthetic bile pigment-protein from the phycobiliprotein complex. This Porphyridium sordidum (Red alga) protein is B-phycoerythrin beta chain (cpeB).